Reading from the N-terminus, the 126-residue chain is Histone H2B type 2-E (126 aa).

Positions 1–12 (MPEPAKSAPAPK) are enriched in low complexity. The disordered stretch occupies residues 1–35 (MPEPAKSAPAPKKGSKKAVTKAQKKDGKKRKRSRK). Position 2 is an N-acetylproline (Pro2). The residue at position 3 (Glu3) is an ADP-ribosyl glutamic acid. Residue Lys6 is modified to N6-(2-hydroxyisobutyryl)lysine; alternate. Residue Lys6 is modified to N6-(beta-hydroxybutyryl)lysine; alternate. An N6-acetyllysine; alternate modification is found at Lys6. The residue at position 6 (Lys6) is an N6-butyryllysine; alternate. At Lys6 the chain carries N6-crotonyllysine; alternate. An N6-lactoyllysine; alternate modification is found at Lys6. Lys6 is covalently cross-linked (Glycyl lysine isopeptide (Lys-Gly) (interchain with G-Cter in SUMO2); alternate). Residue Ser7 is modified to ADP-ribosylserine. Lys12 carries the N6-(beta-hydroxybutyryl)lysine; alternate modification. N6-acetyllysine; alternate is present on residues Lys12 and Lys13. N6-crotonyllysine; alternate is present on residues Lys12 and Lys13. Lys12 carries the N6-lactoyllysine; alternate modification. Lys13 carries the post-translational modification N6-(2-hydroxyisobutyryl)lysine; alternate. Residue Ser15 is modified to Phosphoserine; by STK4/MST1. Residues Lys16, Lys17, Lys21, and Lys24 each carry the N6-acetyllysine; alternate modification. Residues Lys16, Lys17, Lys21, and Lys24 each carry the N6-crotonyllysine; alternate modification. Lys16, Lys17, Lys21, and Lys24 each carry N6-lactoyllysine; alternate. Residues Lys17 and Lys21 each carry the N6-(beta-hydroxybutyryl)lysine; alternate modification. Lys17 bears the N6-glutaryllysine; alternate mark. An N6-(2-hydroxyisobutyryl)lysine; alternate mark is found at Lys21 and Lys24. At Lys21 the chain carries N6-butyryllysine; alternate. Lys21 participates in a covalent cross-link: Glycyl lysine isopeptide (Lys-Gly) (interchain with G-Cter in SUMO2); alternate. At Lys25 the chain carries N6-(2-hydroxyisobutyryl)lysine. N6-(2-hydroxyisobutyryl)lysine; alternate is present on Lys35. The residue at position 35 (Lys35) is an N6-(beta-hydroxybutyryl)lysine; alternate. At Lys35 the chain carries N6-crotonyllysine; alternate. Position 35 is an N6-glutaryllysine; alternate (Lys35). Lys35 carries the post-translational modification N6-succinyllysine; alternate. Lys35 participates in a covalent cross-link: Glycyl lysine isopeptide (Lys-Gly) (interchain with G-Cter in ubiquitin); alternate. A PolyADP-ribosyl glutamic acid modification is found at Glu36. Position 37 is a phosphoserine; by AMPK (Ser37). An N6-(2-hydroxyisobutyryl)lysine; alternate mark is found at Lys44, Lys47, and Lys58. Lys44 is modified (N6-lactoyllysine; alternate). 2 positions are modified to N6-glutaryllysine; alternate: Lys44 and Lys47. N6-methyllysine; alternate is present on Lys47. Lys58 carries the post-translational modification N6,N6-dimethyllysine; alternate. Arg80 bears the Dimethylated arginine mark. Lys86 is modified (N6-(2-hydroxyisobutyryl)lysine; alternate). Lys86 bears the N6-(beta-hydroxybutyryl)lysine; alternate mark. Lys86 is subject to N6-acetyllysine; alternate. Lys86 is modified (N6-lactoyllysine; alternate). At Lys86 the chain carries N6,N6,N6-trimethyllysine; alternate. 2 positions are modified to omega-N-methylarginine: Arg87 and Arg93. Lys109 is subject to N6-(2-hydroxyisobutyryl)lysine; alternate. N6-lactoyllysine; alternate is present on Lys109. Position 109 is an N6-glutaryllysine; alternate (Lys109). Residue Lys109 is modified to N6-methyllysine; alternate. Ser113 carries an O-linked (GlcNAc) serine glycan. Thr116 carries the post-translational modification Phosphothreonine. Residues Lys117 and Lys121 each carry the N6-(2-hydroxyisobutyryl)lysine; alternate modification. Lys117 and Lys121 each carry N6-(beta-hydroxybutyryl)lysine; alternate. Lys117 and Lys121 each carry N6-lactoyllysine; alternate. N6-glutaryllysine; alternate occurs at positions 117 and 121. An N6-succinyllysine; alternate mark is found at Lys117 and Lys121. At Lys117 the chain carries N6-malonyllysine; alternate. Lys117 is modified (N6-methylated lysine; alternate). Lys121 participates in a covalent cross-link: Glycyl lysine isopeptide (Lys-Gly) (interchain with G-Cter in ubiquitin); alternate.

Belongs to the histone H2B family. In terms of assembly, the nucleosome is a histone octamer containing two molecules each of H2A, H2B, H3 and H4 assembled in one H3-H4 heterotetramer and two H2A-H2B heterodimers. The octamer wraps approximately 147 bp of DNA. Post-translationally, monoubiquitination at Lys-35 (H2BK34Ub) by the MSL1/MSL2 dimer is required for histone H3 'Lys-4' (H3K4me) and 'Lys-79' (H3K79me) methylation and transcription activation at specific gene loci, such as HOXA9 and MEIS1 loci. Similarly, monoubiquitination at Lys-121 (H2BK120Ub) by the RNF20/40 complex gives a specific tag for epigenetic transcriptional activation and is also prerequisite for histone H3 'Lys-4' and 'Lys-79' methylation. It also functions cooperatively with the FACT dimer to stimulate elongation by RNA polymerase II. H2BK120Ub also acts as a regulator of mRNA splicing: deubiquitination by USP49 is required for efficient cotranscriptional splicing of a large set of exons. In terms of processing, phosphorylation at Ser-37 (H2BS36ph) by AMPK in response to stress promotes transcription. Phosphorylated on Ser-15 (H2BS14ph) by STK4/MST1 during apoptosis; which facilitates apoptotic chromatin condensation. Also phosphorylated on Ser-15 in response to DNA double strand breaks (DSBs), and in correlation with somatic hypermutation and immunoglobulin class-switch recombination. GlcNAcylation at Ser-113 promotes monoubiquitination of Lys-121. It fluctuates in response to extracellular glucose, and associates with transcribed genes. Post-translationally, ADP-ribosylated by PARP1 or PARP2 on Ser-7 (H2BS6ADPr) in response to DNA damage. H2BS6ADPr promotes recruitment of CHD1L. Mono-ADP-ribosylated on Glu-3 (H2BE2ADPr) by PARP3 in response to single-strand breaks. Poly ADP-ribosylation on Glu-36 (H2BE35ADPr) by PARP1 regulates adipogenesis: it inhibits phosphorylation at Ser-37 (H2BS36ph), thereby blocking expression of pro-adipogenetic genes. In terms of processing, crotonylation (Kcr) is specifically present in male germ cells and marks testis-specific genes in post-meiotic cells, including X-linked genes that escape sex chromosome inactivation in haploid cells. Crotonylation marks active promoters and enhancers and confers resistance to transcriptional repressors. It is also associated with post-meiotically activated genes on autosomes. Lactylated in macrophages by EP300/P300 by using lactoyl-CoA directly derived from endogenous or exogenous lactate, leading to stimulates gene transcription.

It localises to the nucleus. The protein localises to the chromosome. Functionally, core component of nucleosome. Nucleosomes wrap and compact DNA into chromatin, limiting DNA accessibility to the cellular machineries which require DNA as a template. Histones thereby play a central role in transcription regulation, DNA repair, DNA replication and chromosomal stability. DNA accessibility is regulated via a complex set of post-translational modifications of histones, also called histone code, and nucleosome remodeling. Has broad antibacterial activity. May contribute to the formation of the functional antimicrobial barrier of the colonic epithelium, and to the bactericidal activity of amniotic fluid. The polypeptide is Histone H2B type 2-E (Homo sapiens (Human)).